The following is a 271-amino-acid chain: 2-aminophenol 1,6-dioxygenase subunit alpha (271 aa).

This sequence belongs to the LigB/MhpB extradiol dioxygenase family. The APD complex is a heterotetramer of 2 alpha (CnbCa) and 2 beta (CnbCb) subunits.

Its pathway is xenobiotic degradation; nitrobenzene degradation. It participates in xenobiotic degradation; 4-chloronitrobenzene degradation. In terms of biological role, component of the 2-aminophenol 1,6-dioxygenase (APD) complex that catalyzes the ring fission of 2-aminophenol to produce 2-aminomuconic semialdehyde. CnbCa may have a role in the stability of the complex. The complex is also active on other substrates such as 2-amino-5-chlorophenol (68% activity), protocatechuate (33% activity) and catechol (5% activity). Both 2-aminophenol and 2-amino-5-cholorophenol are likely native substrates for this dioxygenase which is involved in the reductive degradation pathway of both nitrobenzene (NB) and 4-chloronitrobenzene (4-CNB), allowing C.testosteroni strain CNB-1 to grow on these compounds as sole source of carbon, nitrogen, and energy. The chain is 2-aminophenol 1,6-dioxygenase subunit alpha from Comamonas testosteroni (Pseudomonas testosteroni).